The following is a 500-amino-acid chain: NAD(P)H-quinone oxidoreductase chain 4, chloroplastic (500 aa).

14 consecutive transmembrane segments (helical) span residues Phe4 to Leu24, Tyr35 to Phe55, Ile87 to Val107, Leu113 to Ser130, Leu134 to Met154, Phe167 to Leu187, Ile211 to His231, His242 to Val262, Ala272 to Ala292, Ile305 to Asp325, Gly330 to Gly350, Leu386 to Thr406, Ile416 to Met436, and Leu462 to Val482.

This sequence belongs to the complex I subunit 4 family.

The protein localises to the plastid. It localises to the chloroplast thylakoid membrane. It carries out the reaction a plastoquinone + NADH + (n+1) H(+)(in) = a plastoquinol + NAD(+) + n H(+)(out). It catalyses the reaction a plastoquinone + NADPH + (n+1) H(+)(in) = a plastoquinol + NADP(+) + n H(+)(out). In Aethionema cordifolium (Lebanon stonecress), this protein is NAD(P)H-quinone oxidoreductase chain 4, chloroplastic.